The sequence spans 377 residues: MKEKVVSLAQDLIRRPSISPNDEGCQQIIAERLEKLGFQIEWMPFNDTLNLWAKHGTSEPVIAFAGHTDVVPTGDENQWSSPPFSAEIIDGMLYGRGAADMKGSLAAMIVAAEEYVKANPNHKGTIALLITSDEEATAKDGTIHVVETLMARDEKITYCMVGEPSSAKNLGDVVKNGRRGSITGNLYIQGIQGHVAYPHLAENPIHKAALFLQELTTYQWDKGNEFFPPTSLQIANIHAGTGSNNVIPAELYIQFNLRYCTEVTDEIIKQKVAEMLEKHNLKYRIEWNLSGKPFLTKPGKLLDSITSAIEETIGITPKAETGGGTSDGRFIALMGAEVVEFGPLNSTIHKVNECVSVEDLGKCGEIYHKMLVNLLDS.

His67 provides a ligand contact to Zn(2+). The active site involves Asp69. A Zn(2+)-binding site is contributed by Asp100. Glu134 (proton acceptor) is an active-site residue. Glu135, Glu163, and His349 together coordinate Zn(2+).

In terms of assembly, homodimer. Zn(2+) is required as a cofactor.

The catalysed reaction is N-succinyl-(2S,6S)-2,6-diaminopimelate + H2O = (2S,6S)-2,6-diaminopimelate + succinate. It participates in amino-acid biosynthesis; L-lysine biosynthesis via DAP pathway; LL-2,6-diaminopimelate from (S)-tetrahydrodipicolinate (succinylase route): step 3/3. With respect to regulation, competitively inhibited by L,L-DAP, D,L-DAP, 2-carboxyethylphosphonic acid (CEPA) and 5-mercaptopentanoic acid (MSPA). Succinate is a poor inhibitor. Catalyzes the hydrolysis of N-succinyl-L,L-diaminopimelic acid (SDAP), forming succinate and LL-2,6-diaminopimelate (DAP), an intermediate involved in the bacterial biosynthesis of lysine and meso-diaminopimelic acid, an essential component of bacterial cell walls. It can only hydrolyze L,L-N-succinyl-diaminopimelic acid (L,L-SDAP) and is inactive toward D,L-, L,D-, and D,D-SDAP. This is Succinyl-diaminopimelate desuccinylase (dapE) from Haemophilus influenzae (strain ATCC 51907 / DSM 11121 / KW20 / Rd).